Consider the following 560-residue polypeptide: Radial spoke head protein 3 homolog (560 aa).

Disordered stretches follow at residues 134–186 (RKRG…EEPM) and 225–249 (ARKR…PVEG). Polar residues predominate over residues 153–162 (RAPSTYTYTS). The stretch at 215–239 (DSLELQRQREARKRALARKQAQEQL) forms a coiled coil. Thr-286 carries the post-translational modification Phosphothreonine; by MAPK1. A coiled-coil region spans residues 331-385 (LEVMEEEELANLRASQREYEELRNSERAEVQRLEEQERRHREEKERRKKQQWEIM). Disordered stretches follow at residues 354 to 375 (NSER…EEKE), 473 to 498 (HGED…ESLE), and 526 to 560 (DRRS…EELS).

The protein belongs to the flagellar radial spoke RSP3 family. In terms of assembly, component of the axonemal radial spoke 1 (RS1) and 2 (RS2) complexes, at least composed of spoke head proteins RSPH1, RSPH3, RSPH9 and the cilia-specific component RSPH4A or sperm-specific component RSPH6A, spoke stalk proteins RSPH14, DNAJB13, DYDC1, ROPN1L and NME5, and the RS1 complex-specific anchor protein IQUB. Interacts with IQUB. Interacts with phosphorylated MAPK1. Interacts with MEK1. Interacts with PKA regulatory subunits PRKAR1A and PRKAR1B. Interacts with RSPH1. Interacts with RSPH4A. Interacts with RSPH6A. Interacts with RSPH9. Interacts with LRRC23.

The protein localises to the cytoplasm. It is found in the cytoskeleton. It localises to the cilium axoneme. Its subcellular location is the flagellum axoneme. Its function is as follows. Functions as part of axonemal radial spoke complexes that play an important part in the motility of sperm and cilia. Functions as a protein kinase A-anchoring protein that scaffolds the cAMP-dependent protein kinase holoenzyme. May serve as a point of convergence for MAPK and PKA signaling in cilia. This is Radial spoke head protein 3 homolog (RSPH3) from Homo sapiens (Human).